A 366-amino-acid polypeptide reads, in one-letter code: 3-isopropylmalate dehydrogenase (366 aa).

78 to 91 lines the NAD(+) pocket; that stretch reads GPKWEDLPSHLQPE. Arg99, Arg109, Arg138, and Asp227 together coordinate substrate. Positions 227, 251, and 255 each coordinate Mg(2+). Position 285 to 297 (285 to 297) interacts with NAD(+); it reads GSAPDIKGKNIAN.

It belongs to the isocitrate and isopropylmalate dehydrogenases family. LeuB type 1 subfamily. In terms of assembly, homodimer. Mg(2+) serves as cofactor. The cofactor is Mn(2+).

Its subcellular location is the cytoplasm. The catalysed reaction is (2R,3S)-3-isopropylmalate + NAD(+) = 4-methyl-2-oxopentanoate + CO2 + NADH. The protein operates within amino-acid biosynthesis; L-leucine biosynthesis; L-leucine from 3-methyl-2-oxobutanoate: step 3/4. In terms of biological role, catalyzes the oxidation of 3-carboxy-2-hydroxy-4-methylpentanoate (3-isopropylmalate) to 3-carboxy-4-methyl-2-oxopentanoate. The product decarboxylates to 4-methyl-2 oxopentanoate. The chain is 3-isopropylmalate dehydrogenase from Buchnera aphidicola subsp. Baizongia pistaciae (strain Bp).